We begin with the raw amino-acid sequence, 117 residues long: Toxin CSTX-8 (117 aa).

The signal sequence occupies residues 1–20 (MKVLVICAVLFLAIFSNSSA). The propeptide occupies 21–47 (ETEDDFLEDESFQADDVIPFLASEQVR). Disulfide bonds link C50–C65, C57–C74, C64–C95, and C76–C93. The propeptide occupies 82 to 87 (RSETDR). T116 bears the Threonine amide mark.

It belongs to the neurotoxin 19 (CSTX) family. 12 subfamily. As to quaternary structure, heterodimer of A and B chains; disulfide-linked. Interacts with CSTX-1 (AC P81694), and with CSTX-9 (AC P58604). In terms of tissue distribution, expressed by the venom gland.

Its subcellular location is the secreted. The protein localises to the target cell membrane. Functionally, synergistic toxin that induces or increases a cytolytic effect when combined with CSTX-1 (AC P81694) or CSTX-9 (AC P58604). When alone, has a weak insecticidal activity, with an unknown molecular target. The chain is Toxin CSTX-8 from Cupiennius salei (American wandering spider).